Here is a 491-residue protein sequence, read N- to C-terminus: Delayed-rectifier potassium channel regulatory subunit KCNS3 (491 aa).

Residues 1-182 are Cytoplasmic-facing; sequence MVFGEFFHRP…IRMENPAYCL (182 aa). The helical transmembrane segment at 183-204 threads the bilayer; that stretch reads SAKLIAISSLSVVLASIVAMCV. At 205–220 the chain is on the extracellular side; the sequence is HSMSEFQNEDGEVDDP. A helical membrane pass occupies residues 221-243; sequence VLEGVEIACIAWFTGELAIRLVA. The Cytoplasmic portion of the chain corresponds to 244–254; it reads APSQKKFWKNP. Residues 255 to 275 traverse the membrane as a helical segment; sequence LNIIDFVSIIPFYATLAVDTK. At 276–285 the chain is on the extracellular side; that stretch reads EEESEDIENM. A helical; Voltage-sensor membrane pass occupies residues 286 to 306; sequence GKVVQILRLMRIFRILKLARH. Over 307–321 the chain is Cytoplasmic; it reads SVGLRSLGATLRHSY. Residues 322-343 form a helical membrane-spanning segment; sequence HEVGLLLLFLSVGISIFSVLIY. Topologically, residues 344-357 are extracellular; sequence SVEKDELASSLTSI. The segment at residues 358 to 369 is an intramembrane region (helical); sequence PICWWWATISMT. The Selectivity filter motif lies at 370-375; it reads TVGYGD. An intramembrane segment occupies 370–377; sequence TVGYGDTH. Residues 378–384 lie on the Extracellular side of the membrane; that stretch reads PVTLAGK. A helical transmembrane segment spans residues 385 to 413; that stretch reads IIASTCIICGILVVALPITIIFNKFSKYY. Topologically, residues 414 to 491 are cytoplasmic; the sequence is QKQKDMDVDQ…TASLENCTAK (78 aa).

The protein belongs to the potassium channel family. S (TC 1.A.1.2) subfamily. Kv9.3/KCNS3 sub-subfamily. As to quaternary structure, heterotetramer with KCNB1. Does not form homomultimers. Expressed in myocytes. Detected in lung, spleen, brain and heart.

It is found in the cell membrane. Functionally, potassium channel regulatory subunit that modulates the delayed rectifier potassium channel activity of KCNB1 by namely slowing down the deactivation and inactivation time constants. While it does not form functional channel on its own, it can form functional heterotetrameric channels with KCNB1. This chain is Delayed-rectifier potassium channel regulatory subunit KCNS3, found in Rattus norvegicus (Rat).